A 440-amino-acid chain; its full sequence is Xylose isomerase (440 aa).

Active-site residues include histidine 100 and aspartate 103. Mg(2+) contacts are provided by glutamate 231, glutamate 267, histidine 270, aspartate 295, aspartate 306, aspartate 308, and aspartate 338.

Belongs to the xylose isomerase family. As to quaternary structure, homotetramer. Mg(2+) serves as cofactor.

Its subcellular location is the cytoplasm. The enzyme catalyses alpha-D-xylose = alpha-D-xylulofuranose. This Burkholderia ambifaria (strain MC40-6) protein is Xylose isomerase.